A 336-amino-acid chain; its full sequence is L-Ala-D/L-amino acid epimerase (336 aa).

Residues Thr130 and Lys152–Lys154 each bind substrate. Mg(2+) contacts are provided by Asp178, Glu204, and Asp229. Substrate contacts are provided by residues Lys251 and Asp301–Asp303.

Belongs to the mandelate racemase/muconate lactonizing enzyme family. Mg(2+) serves as cofactor.

Its function is as follows. Catalyzes the epimerization of D-Ala-D-Ala to D-Ala-L-Ala. Has broad substrate specificity and catalyzes the epimerization of a variety of dipeptides containing an N-terminal Ala followed by Ser, Thr, Val, Met, His, Phe or Trp (in vitro). The polypeptide is L-Ala-D/L-amino acid epimerase (Flavobacterium johnsoniae (strain ATCC 17061 / DSM 2064 / JCM 8514 / BCRC 14874 / CCUG 350202 / NBRC 14942 / NCIMB 11054 / UW101) (Cytophaga johnsonae)).